A 344-amino-acid polypeptide reads, in one-letter code: Mitochondrial genome maintenance exonuclease 1 (344 aa).

Active-site residues include aspartate 238, aspartate 251, and lysine 253. A Phosphoserine modification is found at serine 343.

The protein belongs to the MGME1 family.

The protein localises to the mitochondrion. Its function is as follows. Metal-dependent single-stranded DNA (ssDNA) exonuclease involved in mitochondrial genome maintenance. Has preference for 5'-3' exonuclease activity but is also capable of endonuclease activity on linear substrates. Necessary for maintenance of proper 7S DNA levels. Probably involved in mitochondrial DNA (mtDNA) repair, possibly via the processing of displaced DNA containing Okazaki fragments during RNA-primed DNA synthesis on the lagging strand or via processing of DNA flaps during long-patch base excision repair. Specifically binds 5-hydroxymethylcytosine (5hmC)-containing DNA in stem cells. The polypeptide is Mitochondrial genome maintenance exonuclease 1 (Homo sapiens (Human)).